Reading from the N-terminus, the 392-residue chain is Probable tRNA sulfurtransferase (392 aa).

The THUMP domain occupies 60–162 (QQVINDLQQV…HDCAIVYGHK (103 aa)). ATP is bound by residues 180 to 181 (LL), 205 to 206 (TF), Arg264, Gly286, and Gln295.

Belongs to the ThiI family.

The protein resides in the cytoplasm. The enzyme catalyses [ThiI sulfur-carrier protein]-S-sulfanyl-L-cysteine + a uridine in tRNA + 2 reduced [2Fe-2S]-[ferredoxin] + ATP + H(+) = [ThiI sulfur-carrier protein]-L-cysteine + a 4-thiouridine in tRNA + 2 oxidized [2Fe-2S]-[ferredoxin] + AMP + diphosphate. It carries out the reaction [ThiS sulfur-carrier protein]-C-terminal Gly-Gly-AMP + S-sulfanyl-L-cysteinyl-[cysteine desulfurase] + AH2 = [ThiS sulfur-carrier protein]-C-terminal-Gly-aminoethanethioate + L-cysteinyl-[cysteine desulfurase] + A + AMP + 2 H(+). It functions in the pathway cofactor biosynthesis; thiamine diphosphate biosynthesis. In terms of biological role, catalyzes the ATP-dependent transfer of a sulfur to tRNA to produce 4-thiouridine in position 8 of tRNAs, which functions as a near-UV photosensor. Also catalyzes the transfer of sulfur to the sulfur carrier protein ThiS, forming ThiS-thiocarboxylate. This is a step in the synthesis of thiazole, in the thiamine biosynthesis pathway. The sulfur is donated as persulfide by IscS. This is Probable tRNA sulfurtransferase from Ureaplasma urealyticum serovar 10 (strain ATCC 33699 / Western).